A 153-amino-acid polypeptide reads, in one-letter code: Sperm surface protein Sp17 (153 aa).

The interval 74 to 117 (FKVPSGATESKEAPPEKSEPEKETPQEVVKEQETQVSFVEEVST) is disordered. Basic and acidic residues predominate over residues 82-106 (ESKEAPPEKSEPEKETPQEVVKEQE). Positions 122–151 (AAAAAVKIQAAFRGHKARKEVKIMKESSIE) constitute an IQ domain.

Homodimer. May interact with ROPN1. Testis- and sperm-specific.

Its subcellular location is the membrane. Its function is as follows. Sperm surface zona pellucida binding protein. Helps to bind spermatozoa to the zona pellucida with high affinity. Might function in binding zona pellucida and carbohydrates. In Notamacropus eugenii (Tammar wallaby), this protein is Sperm surface protein Sp17 (SPA17).